The sequence spans 294 residues: 4-hydroxy-tetrahydrodipicolinate synthase (294 aa).

Threonine 44 serves as a coordination point for pyruvate. The active-site Proton donor/acceptor is tyrosine 132. The active-site Schiff-base intermediate with substrate is lysine 161. Residue isoleucine 206 participates in pyruvate binding.

This sequence belongs to the DapA family. Homotetramer; dimer of dimers.

It localises to the cytoplasm. It carries out the reaction L-aspartate 4-semialdehyde + pyruvate = (2S,4S)-4-hydroxy-2,3,4,5-tetrahydrodipicolinate + H2O + H(+). It participates in amino-acid biosynthesis; L-lysine biosynthesis via DAP pathway; (S)-tetrahydrodipicolinate from L-aspartate: step 3/4. Its function is as follows. Catalyzes the condensation of (S)-aspartate-beta-semialdehyde [(S)-ASA] and pyruvate to 4-hydroxy-tetrahydrodipicolinate (HTPA). This Thermotoga neapolitana (strain ATCC 49049 / DSM 4359 / NBRC 107923 / NS-E) protein is 4-hydroxy-tetrahydrodipicolinate synthase.